A 145-amino-acid polypeptide reads, in one-letter code: Sperm mitochondrial-associated cysteine-rich protein (145 aa).

Phosphoserine is present on residues serine 38, serine 45, serine 113, and serine 131. Residues 105-145 (CSSENKTESDSDGSGQTQDRGAQTQQSPQGGQGNWNQKKTK) form a disordered region. The span at 116–145 (DGSGQTQDRGAQTQQSPQGGQGNWNQKKTK) shows a compositional bias: polar residues.

Testis. Selectively expressed in the spermatids of seminiferous tubules and in flagella of epididymal sperm.

It localises to the cytoplasm. The protein resides in the mitochondrion membrane. Functionally, involved in sperm motility. Its absence is associated with genetic background dependent male infertility. Infertility may be due to reduced sperm motility in the female reproductive tract and inability to penetrate the oocyte zona pellucida. In Rattus norvegicus (Rat), this protein is Sperm mitochondrial-associated cysteine-rich protein (Smcp).